We begin with the raw amino-acid sequence, 293 residues long: MALRLDGKQLAAQLEVRLQQQIQKGIAAAGRSPGLAVLRIGDDPASAVYVRNKEKACARIGVESFGSHLPADASQQEVLTAIRELNADDRVDGILLQLPLPEGLDETPLLAEIDPNKDADGLHTLNLGRLLKGEQGPRSCTPAGVMVMLRDQGIDPAGKRAVVVGRSILVGQPMALMLQAANATVTVAHSRTQHLESITRQAEILVVAAGRPEMIGADHITPGCVVVDVGIHRRPEGGLCGDVCAEELEPVAAALSPVPGGVGPMTVTMLLVNTVLAWCRRHQVALELSDLVV.

Residues 165-167 (GRS), Ser190, and Ile231 each bind NADP(+).

The protein belongs to the tetrahydrofolate dehydrogenase/cyclohydrolase family. Homodimer.

The enzyme catalyses (6R)-5,10-methylene-5,6,7,8-tetrahydrofolate + NADP(+) = (6R)-5,10-methenyltetrahydrofolate + NADPH. The catalysed reaction is (6R)-5,10-methenyltetrahydrofolate + H2O = (6R)-10-formyltetrahydrofolate + H(+). It participates in one-carbon metabolism; tetrahydrofolate interconversion. Its function is as follows. Catalyzes the oxidation of 5,10-methylenetetrahydrofolate to 5,10-methenyltetrahydrofolate and then the hydrolysis of 5,10-methenyltetrahydrofolate to 10-formyltetrahydrofolate. In Synechococcus sp. (strain CC9311), this protein is Bifunctional protein FolD.